Consider the following 523-residue polypeptide: Asparagine--tRNA ligase (523 aa).

The disordered stretch occupies residues 329–350 (SARGDTPLAARSTARTPPVRTP).

The protein belongs to the class-II aminoacyl-tRNA synthetase family. In terms of assembly, homodimer.

It is found in the cytoplasm. It carries out the reaction tRNA(Asn) + L-asparagine + ATP = L-asparaginyl-tRNA(Asn) + AMP + diphosphate + H(+). The sequence is that of Asparagine--tRNA ligase from Treponema pallidum (strain Nichols).